The sequence spans 511 residues: Cytochrome P450 monooxyhenase eriC (511 aa).

The helical transmembrane segment at 2-22 (VLADFISIPTVSIACLAVLGI) threads the bilayer. Residue Cys445 coordinates heme.

This sequence belongs to the cytochrome P450 family. The cofactor is heme.

Its subcellular location is the membrane. It catalyses the reaction erinacol + reduced [NADPH--hemoprotein reductase] + O2 = cyathadiol + oxidized [NADPH--hemoprotein reductase] + H2O + H(+). It participates in secondary metabolite biosynthesis. Cytochrome P450 monooxygenase; part of the gene cluster that mediates the biosynthesis of erinacines, cyathane-xylosides that show unique biological activities, including leishmanicidal activity, stimulating activity for nerve growth-factor synthesis, and agonistic activity toward the kappa opioid receptor. Within the pathway, eriC hydroxylates erinacol at C-15 of the seven-membered ring to yield cyathadiol. The first step of the erinacines biosynthesis pathway is catalyzed by the geranylgeranyl diphosphate (GGPP) synthase eriE via conversion of farnesyl pyrophosphate and isopentyl pyrophosphate into geranylgeranyl pyrophosphate (GGPP). GGPP is then substrate of the diterpene cyclase eriG for the production of cyatha-3,12-diene. The cytochrome P450 monooxygenase eriI then hydroxylates cyatha-3,12-diene at C-14 of the seven-membered ring to produce erinacol, which is further hydroxylated at C-15 by the cytochrome P450 monooxygenase eriC to yield cyathadiol. The cytochrome P450 monooxygenase eriA then catalyzes C-11 hydroxylation in the presence of the short chain dehydrogenase/reductase (SDR) eriH, which leads to the production of cyathatriol. The acetyltransferase eriL converts cyathatriol into 11-O-acetyl-cyathatriol. The SDR eriH catalyzes further oxidation of 11-O-acetyl-cyathatriol into 1-O-acetylcyathin A3. Finally, the glycosyl transferase eriJ tranfers xylose from UDP-xylose onto C-14 of 11-O-acetyl-cyathatriol to form eracine Q. EriJ is also able to convert 11-O-acetyl-cyathatriol to eracine Q2 by using UDP-D-glucose as cosubstrate, but at a lower rate. This is Cytochrome P450 monooxyhenase eriC from Hericium erinaceus (Lion's mane mushroom).